The primary structure comprises 375 residues: 23S rRNA (uracil(747)-C(5))-methyltransferase RlmC (375 aa).

Residues Cys3, Cys11, Cys14, and Cys87 each coordinate [4Fe-4S] cluster. 4 residues coordinate S-adenosyl-L-methionine: Gln212, Phe241, Glu262, and Asn307. Cys334 acts as the Nucleophile in catalysis.

This sequence belongs to the class I-like SAM-binding methyltransferase superfamily. RNA M5U methyltransferase family. RlmC subfamily.

The enzyme catalyses uridine(747) in 23S rRNA + S-adenosyl-L-methionine = 5-methyluridine(747) in 23S rRNA + S-adenosyl-L-homocysteine + H(+). Functionally, catalyzes the formation of 5-methyl-uridine at position 747 (m5U747) in 23S rRNA. The polypeptide is 23S rRNA (uracil(747)-C(5))-methyltransferase RlmC (Shigella boydii serotype 18 (strain CDC 3083-94 / BS512)).